The chain runs to 346 residues: Zinc-type alcohol dehydrogenase-like protein C1773.06c (346 aa).

The protein belongs to the zinc-containing alcohol dehydrogenase family. Quinone oxidoreductase subfamily.

The protein localises to the cytoplasm. The protein is Zinc-type alcohol dehydrogenase-like protein C1773.06c of Schizosaccharomyces pombe (strain 972 / ATCC 24843) (Fission yeast).